Reading from the N-terminus, the 333-residue chain is Adenosine deaminase (333 aa).

Zn(2+)-binding residues include histidine 12 and histidine 14. Positions 14, 16, and 170 each coordinate substrate. Residue histidine 197 participates in Zn(2+) binding. Glutamate 200 serves as the catalytic Proton donor. Position 278 (aspartate 278) interacts with Zn(2+). Aspartate 279 lines the substrate pocket.

It belongs to the metallo-dependent hydrolases superfamily. Adenosine and AMP deaminases family. Adenosine deaminase subfamily. It depends on Zn(2+) as a cofactor.

It carries out the reaction adenosine + H2O + H(+) = inosine + NH4(+). The enzyme catalyses 2'-deoxyadenosine + H2O + H(+) = 2'-deoxyinosine + NH4(+). In terms of biological role, catalyzes the hydrolytic deamination of adenosine and 2-deoxyadenosine. The protein is Adenosine deaminase of Aliivibrio fischeri (strain ATCC 700601 / ES114) (Vibrio fischeri).